Reading from the N-terminus, the 940-residue chain is Isoleucine--tRNA ligase (940 aa).

The short motif at 58 to 68 (PYANGSIHIGH) is the 'HIGH' region element. E564 serves as a coordination point for L-isoleucyl-5'-AMP. A 'KMSKS' region motif is present at residues 605–609 (KMSKS). An ATP-binding site is contributed by K608. Zn(2+) contacts are provided by C903, C906, C923, and C926.

This sequence belongs to the class-I aminoacyl-tRNA synthetase family. IleS type 1 subfamily. Monomer. It depends on Zn(2+) as a cofactor.

It localises to the cytoplasm. The enzyme catalyses tRNA(Ile) + L-isoleucine + ATP = L-isoleucyl-tRNA(Ile) + AMP + diphosphate. Functionally, catalyzes the attachment of isoleucine to tRNA(Ile). As IleRS can inadvertently accommodate and process structurally similar amino acids such as valine, to avoid such errors it has two additional distinct tRNA(Ile)-dependent editing activities. One activity is designated as 'pretransfer' editing and involves the hydrolysis of activated Val-AMP. The other activity is designated 'posttransfer' editing and involves deacylation of mischarged Val-tRNA(Ile). The protein is Isoleucine--tRNA ligase of Shewanella sp. (strain MR-7).